Here is a 507-residue protein sequence, read N- to C-terminus: Glycerol kinase 2 (507 aa).

Residue threonine 16 coordinates ADP. Positions 16, 17, and 18 each coordinate ATP. Threonine 16 serves as a coordination point for sn-glycerol 3-phosphate. Arginine 20 lines the ADP pocket. Residues arginine 86, glutamate 87, tyrosine 138, and aspartate 248 each contribute to the sn-glycerol 3-phosphate site. Residues arginine 86, glutamate 87, tyrosine 138, aspartate 248, and glutamine 249 each coordinate glycerol. Residues threonine 270 and glycine 314 each coordinate ADP. ATP-binding residues include threonine 270, glycine 314, glutamine 318, and glycine 415. Residues glycine 415 and asparagine 419 each coordinate ADP.

The protein belongs to the FGGY kinase family.

It catalyses the reaction glycerol + ATP = sn-glycerol 3-phosphate + ADP + H(+). Its pathway is polyol metabolism; glycerol degradation via glycerol kinase pathway; sn-glycerol 3-phosphate from glycerol: step 1/1. Its activity is regulated as follows. Inhibited by fructose 1,6-bisphosphate (FBP). Functionally, key enzyme in the regulation of glycerol uptake and metabolism. Catalyzes the phosphorylation of glycerol to yield sn-glycerol 3-phosphate. The protein is Glycerol kinase 2 of Streptomyces avermitilis (strain ATCC 31267 / DSM 46492 / JCM 5070 / NBRC 14893 / NCIMB 12804 / NRRL 8165 / MA-4680).